A 219-amino-acid chain; its full sequence is Large ribosomal subunit protein uL1 (219 aa).

This sequence belongs to the universal ribosomal protein uL1 family. In terms of assembly, part of the 50S ribosomal subunit.

Binds directly to 23S rRNA. Probably involved in E site tRNA release. Its function is as follows. Protein L1 is also a translational repressor protein, it controls the translation of its operon by binding to its mRNA. The polypeptide is Large ribosomal subunit protein uL1 (Pyrococcus abyssi (strain GE5 / Orsay)).